The primary structure comprises 388 residues: Succinyl-diaminopimelate desuccinylase (388 aa).

H72 contacts Zn(2+). D74 is an active-site residue. D105 provides a ligand contact to Zn(2+). The active-site Proton acceptor is the E139. Residues E140, E168, and H353 each coordinate Zn(2+).

The protein belongs to the peptidase M20A family. DapE subfamily. Homodimer. Zn(2+) is required as a cofactor. It depends on Co(2+) as a cofactor.

It carries out the reaction N-succinyl-(2S,6S)-2,6-diaminopimelate + H2O = (2S,6S)-2,6-diaminopimelate + succinate. The protein operates within amino-acid biosynthesis; L-lysine biosynthesis via DAP pathway; LL-2,6-diaminopimelate from (S)-tetrahydrodipicolinate (succinylase route): step 3/3. In terms of biological role, catalyzes the hydrolysis of N-succinyl-L,L-diaminopimelic acid (SDAP), forming succinate and LL-2,6-diaminopimelate (DAP), an intermediate involved in the bacterial biosynthesis of lysine and meso-diaminopimelic acid, an essential component of bacterial cell walls. The chain is Succinyl-diaminopimelate desuccinylase from Orientia tsutsugamushi (strain Ikeda) (Rickettsia tsutsugamushi).